The sequence spans 930 residues: Urea transporter 2 (930 aa).

Residues Met-1 to Ser-11 show a composition bias toward basic and acidic residues. A disordered region spans residues Met-1–Arg-90. 2 stretches are compositionally biased toward low complexity: residues Asp-12 to Ser-25 and Ser-32 to Ser-43. Positions Pro-56 to Arg-89 are enriched in basic and acidic residues. Transmembrane regions (helical) follow at residues Ile-145–Gly-165, Ala-185–Phe-205, Trp-213–Leu-233, Leu-242–His-262, Asn-280–Gly-300, Gly-311–Ile-331, Ile-350–Ala-372, and Val-401–Leu-421. Residues Ser-452–Glu-479 form a disordered region. Position 487 is a phosphoserine (Ser-487). The next 4 membrane-spanning stretches (helical) occupy residues Gly-610–Leu-630, Ala-648–Phe-668, Trp-676–Leu-696, and Leu-705–His-725. An N-linked (GlcNAc...) asparagine glycan is attached at Asn-743. A run of 4 helical transmembrane segments spans residues Gly-774–Ile-794, Ile-813–Phe-833, Leu-842–Leu-862, and Val-864–Leu-884.

It belongs to the urea transporter family. Highly expressed in kidney medulla (at protein level). Also detected in testes, heart, brain and liver (at protein level). In the kidney, present in thin descending limbs of the loop of Henle and in the middle and terminal inner medullary collecting ducts. In terms of tissue distribution, expressed in the kidney medulla. As to expression, expressed in the peritubular myoid cells forming the outermost layer of the seminiferous tubules within the testes and is not detected in kidney. Expression levels are coordinated with the stage of testes development and increase 15 days postpartum, commensurate with the start of seminiferous tubule fluid movement.

It is found in the apical cell membrane. The protein localises to the basolateral cell membrane. It catalyses the reaction urea(in) = urea(out). Its activity is regulated as follows. Inhibited by phloretin. Activated by forskolin, 3-isobutyl-1-methylxanthine (IBMX) and cAMP. Inhibited by phloretin. With respect to regulation, inhibited by phloretin. Activated by forskolin, 3-isobutyl-1-methylxanthine (IBMX) and cAMP. Its function is as follows. Mediates the transport of urea driven by a concentration gradient across the cell membrane of the renal inner medullary collecting duct which is critical to the urinary concentrating mechanism. Functionally, mediates the transport of urea driven by a concentration gradient across the cell membrane. Implicated in the urea movement across the blood-testis barrier and does not translocate water. In Mus musculus (Mouse), this protein is Urea transporter 2 (Slc14a2).